The following is a 331-amino-acid chain: Ferredoxin--NADP reductase 2 (331 aa).

The FAD site is built by E37, Q45, Y50, V90, F124, D286, and T327.

Belongs to the ferredoxin--NADP reductase type 2 family. Homodimer. FAD is required as a cofactor.

The catalysed reaction is 2 reduced [2Fe-2S]-[ferredoxin] + NADP(+) + H(+) = 2 oxidized [2Fe-2S]-[ferredoxin] + NADPH. This Listeria monocytogenes serovar 1/2a (strain ATCC BAA-679 / EGD-e) protein is Ferredoxin--NADP reductase 2.